Consider the following 87-residue polypeptide: Small ribosomal subunit protein bS20 (87 aa).

The interval M1–K22 is disordered.

The protein belongs to the bacterial ribosomal protein bS20 family.

Binds directly to 16S ribosomal RNA. The sequence is that of Small ribosomal subunit protein bS20 from Clavibacter michiganensis subsp. michiganensis (strain NCPPB 382).